The sequence spans 312 residues: ADIPOR-like receptor IZH4 (312 aa).

Residues 1–38 (MVSLTTIEQSPVKCETTTEKESNDTRGTDSNENAETKE) form a disordered region. Topologically, residues 1–64 (MVSLTTIEQS…YKNKSSRNES (64 aa)) are cytoplasmic. The segment covering 16 to 38 (TTTEKESNDTRGTDSNENAETKE) has biased composition (basic and acidic residues). A helical transmembrane segment spans residues 65 to 85 (LVALIYLLGSMLSFCLLIFFT). At 86–101 (DFYLIPLFPTTTTMTD) the chain is on the lumenal side. Residues 102–122 (YIVFNFYLLNVFVFCMVHFIY) form a helical membrane-spanning segment. The Cytoplasmic segment spans residues 123–141 (HFVKNISLQQHLEHWQKFS). Residues 142–162 (YLSNINLLISSQITILYYLFY) form a helical membrane-spanning segment. Over 163-165 (DYV) the chain is Lumenal. A helical membrane pass occupies residues 166-186 (FFFKIFTLLMNFIGLVAYFFI). Residues 187–201 (LTDKLISSKRFNKTV) lie on the Cytoplasmic side of the membrane. A helical transmembrane segment spans residues 202 to 222 (FFISVSVVCCSLPLLTAIITF). The Lumenal portion of the chain corresponds to 223–231 (DGLENLKER). A helical transmembrane segment spans residues 232 to 252 (IKVNAITWELVALVAASIIYV). Over 253–277 (TRFPESLFRRNKKEEGWNHSEYLFH) the chain is Cytoplasmic. A helical transmembrane segment spans residues 278–298 (LLISGTAFYHFFILIQSYILM). The Lumenal portion of the chain corresponds to 299-312 (HSSLNQPELINFKS).

This sequence belongs to the ADIPOR family.

The protein resides in the endoplasmic reticulum membrane. Its function is as follows. ADIPOR-like receptor involved in zinc metabolism either by altering membrane sterol content or by directly altering cellular zinc levels. In Saccharomyces cerevisiae (strain ATCC 204508 / S288c) (Baker's yeast), this protein is ADIPOR-like receptor IZH4 (IZH4).